The chain runs to 328 residues: Tetraacyldisaccharide 4'-kinase (328 aa).

Residue 55-62 (TAGGNGKT) participates in ATP binding.

The protein belongs to the LpxK family.

The catalysed reaction is a lipid A disaccharide + ATP = a lipid IVA + ADP + H(+). It functions in the pathway glycolipid biosynthesis; lipid IV(A) biosynthesis; lipid IV(A) from (3R)-3-hydroxytetradecanoyl-[acyl-carrier-protein] and UDP-N-acetyl-alpha-D-glucosamine: step 6/6. Functionally, transfers the gamma-phosphate of ATP to the 4'-position of a tetraacyldisaccharide 1-phosphate intermediate (termed DS-1-P) to form tetraacyldisaccharide 1,4'-bis-phosphate (lipid IVA). The protein is Tetraacyldisaccharide 4'-kinase of Yersinia pseudotuberculosis serotype I (strain IP32953).